We begin with the raw amino-acid sequence, 147 residues long: Protein-export protein SecB (147 aa).

The protein belongs to the SecB family. Homotetramer, a dimer of dimers. One homotetramer interacts with 1 SecA dimer.

It is found in the cytoplasm. In terms of biological role, one of the proteins required for the normal export of preproteins out of the cell cytoplasm. It is a molecular chaperone that binds to a subset of precursor proteins, maintaining them in a translocation-competent state. It also specifically binds to its receptor SecA. This is Protein-export protein SecB from Neisseria meningitidis serogroup A / serotype 4A (strain DSM 15465 / Z2491).